We begin with the raw amino-acid sequence, 134 residues long: Profilin-2 (134 aa).

Cys13 and Cys118 are oxidised to a cystine. The Involved in PIP2 interaction signature appears at Ala84 to Thr100. A Phosphothreonine modification is found at Thr114.

This sequence belongs to the profilin family. In terms of assembly, occurs in many kinds of cells as a complex with monomeric actin in a 1:1 ratio. Post-translationally, phosphorylated by MAP kinases.

The protein resides in the cytoplasm. It localises to the cytoskeleton. Functionally, binds to actin and affects the structure of the cytoskeleton. At high concentrations, profilin prevents the polymerization of actin, whereas it enhances it at low concentrations. This is Profilin-2 from Olea europaea (Common olive).